Consider the following 298-residue polypeptide: Estradiol 17-beta-dehydrogenase 11 (298 aa).

An N-terminal signal peptide occupies residues 1-21; the sequence is MKYLLDLILLLPLLIVFSIES. 40 to 64 contributes to the NADP(+) binding site; it reads LITGAGHGIGRLTAYEFAKLNTKLV. Substrate is bound at residue S172. Y185 (proton acceptor) is an active-site residue.

It belongs to the short-chain dehydrogenases/reductases (SDR) family. 17-beta-HSD 3 subfamily. In terms of tissue distribution, expressed in the liver (at protein level). Also expressed in the intestine and, at much lower levels, in the kidney.

It localises to the endoplasmic reticulum. Its subcellular location is the lipid droplet. It catalyses the reaction 17beta-estradiol + NAD(+) = estrone + NADH + H(+). It carries out the reaction 17beta-estradiol + NADP(+) = estrone + NADPH + H(+). Its function is as follows. Can convert androstan-3-alpha,17-beta-diol (3-alpha-diol) to androsterone in vitro, suggesting that it may participate in androgen metabolism during steroidogenesis. May act by metabolizing compounds that stimulate steroid synthesis and/or by generating metabolites that inhibit it. Has no activity toward DHEA (dehydroepiandrosterone), or A-dione (4-androste-3,17-dione), and only a slight activity toward testosterone to A-dione. The polypeptide is Estradiol 17-beta-dehydrogenase 11 (Hsd17b11) (Mus musculus (Mouse)).